The sequence spans 139 residues: Small ribosomal subunit protein eS12 (139 aa).

The protein belongs to the eukaryotic ribosomal protein eS12 family. Subunit of the 40S ribosomal complex. Part of the small subunit (SSU) processome, composed of more than 70 proteins and the RNA chaperone small nucleolar RNA (snoRNA) U3.

It localises to the nucleus. The protein localises to the nucleolus. In terms of biological role, subunit of the 40S ribosomal complex. Part of the small subunit (SSU) processome, first precursor of the small eukaryotic ribosomal subunit. During the assembly of the SSU processome in the nucleolus, many ribosome biogenesis factors, an RNA chaperone and ribosomal proteins associate with the nascent pre-rRNA and work in concert to generate RNA folding, modifications, rearrangements and cleavage as well as targeted degradation of pre-ribosomal RNA by the RNA exosome. In wing imaginal disks, might have a role in translation rate, growth and cell competition, probably through regulation of Xrp1 expression. Might have a role in development and longevity. The sequence is that of Small ribosomal subunit protein eS12 from Drosophila melanogaster (Fruit fly).